A 203-amino-acid chain; its full sequence is MNDFTLNAELRSDLGKGASRRLRRLASLVPAVVYGGDKAPESISMLAKEVAKLLENEASYSHIIELNVGGTKQNVIIKALQRHPAKGHVLHADFVRVVAGQKLTAIVPVHFIGEEAPIKKGGEVSHVTSELEVSCLPKDLPEFIEVDVSALEIGSIVHLSDVKAPKGVEFVALAHGNDLAIANVHAPRVVKDEDEEAAEGAAE.

This sequence belongs to the bacterial ribosomal protein bL25 family. CTC subfamily. Part of the 50S ribosomal subunit; part of the 5S rRNA/L5/L18/L25 subcomplex. Contacts the 5S rRNA. Binds to the 5S rRNA independently of L5 and L18.

In terms of biological role, this is one of the proteins that binds to the 5S RNA in the ribosome where it forms part of the central protuberance. This chain is Large ribosomal subunit protein bL25, found in Pseudomonas syringae pv. tomato (strain ATCC BAA-871 / DC3000).